The sequence spans 453 residues: Homogentisate 1,2-dioxygenase (453 aa).

Basic and acidic residues predominate over residues 1 to 12 (MLEKAERQRKAA). Residues 1–43 (MLEKAERQRKAAPDQQRSAGYMPGFGNDFETESLPGSLPQGQN) form a disordered region. Histidine 306 (proton acceptor) is an active-site residue. Fe cation is bound by residues histidine 349 and glutamate 355. Residues tyrosine 364 and histidine 385 each coordinate homogentisate. Histidine 385 is a Fe cation binding site.

It belongs to the homogentisate dioxygenase family. Hexamer; dimer of trimers. The cofactor is Fe cation.

It catalyses the reaction homogentisate + O2 = 4-maleylacetoacetate + H(+). It functions in the pathway amino-acid degradation; L-phenylalanine degradation; acetoacetate and fumarate from L-phenylalanine: step 4/6. Functionally, involved in the catabolism of homogentisate (2,5-dihydroxyphenylacetate or 2,5-OH-PhAc), a central intermediate in the degradation of phenylalanine and tyrosine. Catalyzes the oxidative ring cleavage of the aromatic ring of homogentisate to yield maleylacetoacetate. In Sinorhizobium medicae (strain WSM419) (Ensifer medicae), this protein is Homogentisate 1,2-dioxygenase.